The sequence spans 313 residues: Probable 5-dehydro-4-deoxyglucarate dehydratase (313 aa).

Belongs to the DapA family.

The enzyme catalyses 5-dehydro-4-deoxy-D-glucarate + H(+) = 2,5-dioxopentanoate + CO2 + H2O. The protein operates within carbohydrate acid metabolism; D-glucarate degradation; 2,5-dioxopentanoate from D-glucarate: step 2/2. The sequence is that of Probable 5-dehydro-4-deoxyglucarate dehydratase from Bradyrhizobium sp. (strain BTAi1 / ATCC BAA-1182).